Here is a 113-residue protein sequence, read N- to C-terminus: Large ribosomal subunit protein bL19 (113 aa).

The protein belongs to the bacterial ribosomal protein bL19 family.

Its function is as follows. This protein is located at the 30S-50S ribosomal subunit interface and may play a role in the structure and function of the aminoacyl-tRNA binding site. The polypeptide is Large ribosomal subunit protein bL19 (Mycolicibacterium gilvum (strain PYR-GCK) (Mycobacterium gilvum (strain PYR-GCK))).